Consider the following 256-residue polypeptide: Thiazole synthase (256 aa).

Catalysis depends on lysine 95, which acts as the Schiff-base intermediate with DXP. 1-deoxy-D-xylulose 5-phosphate contacts are provided by residues glycine 156, 182–183, and 204–205; these read AG and NT.

The protein belongs to the ThiG family. In terms of assembly, homotetramer. Forms heterodimers with either ThiH or ThiS.

The protein localises to the cytoplasm. It catalyses the reaction [ThiS sulfur-carrier protein]-C-terminal-Gly-aminoethanethioate + 2-iminoacetate + 1-deoxy-D-xylulose 5-phosphate = [ThiS sulfur-carrier protein]-C-terminal Gly-Gly + 2-[(2R,5Z)-2-carboxy-4-methylthiazol-5(2H)-ylidene]ethyl phosphate + 2 H2O + H(+). It participates in cofactor biosynthesis; thiamine diphosphate biosynthesis. In terms of biological role, catalyzes the rearrangement of 1-deoxy-D-xylulose 5-phosphate (DXP) to produce the thiazole phosphate moiety of thiamine. Sulfur is provided by the thiocarboxylate moiety of the carrier protein ThiS. In vitro, sulfur can be provided by H(2)S. The protein is Thiazole synthase of Salmonella paratyphi B (strain ATCC BAA-1250 / SPB7).